Here is a 234-residue protein sequence, read N- to C-terminus: Melanoregulin (234 aa).

The tract at residues 215 to 234 is disordered; it reads MNQNISGGEDEDEDESEPDD. A compositionally biased stretch (acidic residues) spans 222 to 234; the sequence is GEDEDEDESEPDD.

Belongs to the melanoregulin family.

The protein localises to the apical cell membrane. It is found in the melanosome membrane. The protein resides in the lysosome membrane. Its subcellular location is the cytoplasmic vesicle membrane. In terms of biological role, probably functions as a cargo-recognition protein that couples cytoplasmic vesicles to the transport machinery. Contributes to retrograde melanosome transport from the cell periphery to the center. Overexpression causes accumulation of late endosomes and/or lysosomes at the microtubule organising center (MTOC) at the center of the cell. Probably binds cholesterol and requires the presence of cholesterol in membranes to function in microtubule-mediated retrograde organelle transport. Binds phosphatidylinositol 3-phosphate, phosphatidylinositol 4-phosphate, phosphatidylinositol 5-phosphate and phosphatidylinositol 3,5-bisphosphate. The chain is Melanoregulin (mreg) from Danio rerio (Zebrafish).